Here is a 411-residue protein sequence, read N- to C-terminus: Heterogeneous nuclear ribonucleoprotein 1 (411 aa).

In terms of domain architecture, RRM 1 spans 6-82 (GKLFVGGISW…REVDVKRAMS (77 aa)). Disordered regions lie at residues 81–103 (MSRE…SSGG), 183–221 (KRAL…DGRM), and 358–411 (AAYG…RQGQ). Positions 87–101 (QVSGRTGNLNTSRSS) are enriched in polar residues. The RRM 2 domain maps to 110–187 (KKIFVGGLPP…KQVEVKRALP (78 aa)). Gly residues-rich tracts occupy residues 192–212 (PGGG…GYGG), 362–387 (VVGG…GYGD), and 397–411 (GYGG…RQGQ). Residues 341–390 (GYGYGGYSGSDSGYGNQAAYGVVGGRPSGGGSNNPGSGGYMGGGYGDGSW) are nuclear targeting sequence (M9).

In terms of assembly, component of the spliceosome. Interacts with TRN1.

The protein localises to the nucleus. It is found in the cytoplasm. Involved with pre-mRNA processing. Forms complexes (ribonucleosomes) with at least 20 other different hnRNP and heterogeneous nuclear RNA in the nucleus. Its function is as follows. Involved in the packaging of pre-mRNA into hnRNP particles, transport of poly(A) mRNA from the nucleus to the cytoplasm and may modulate splice site selection. In Arabidopsis thaliana (Mouse-ear cress), this protein is Heterogeneous nuclear ribonucleoprotein 1 (RNP1).